Consider the following 1285-residue polypeptide: MRSSTAAVQRPAAGDPEPRRPAGWAARRSLPRTARRGGRGGAVAYPSAGPPPRGPGAPPRGPRSPPCASDCFGSNGHGASRPGSRRLLGVCGPPRPFVVVLLALAPAATPARACPPGVRASPPRSGVSSSARPAPGCPRPACEPVYGPLTMSLKPQPQPPAPATGRKPGGGLLSSPGAAPASAAVTSASVVPAPAAPVASSSAAAGGGRPGLGRGRNSSKGLPQPTISFDGIYANVRMVHILTSVVGSKCEVQVKNGGIYEGVFKTYSPKCDLVLDAAHEKSTESSSGPKREEIMESVLFKCSDFVVVQFKDTDSSYARRDAFTDSALSAKVNGEHKEKDLEPWDAGELTASEELELENDVSNGWDPNDMFRYNEENYGVVSTYDSSLSSYTVPLERDNSEEFLKREARANQLAEEIESSAQYKARVALENDDRSEEEKYTAVQRNCSDREGHGPNTRDNKYIPPGQRNREVLSWGSGRQSSPRMGQPGPGSMPSRAASHTSDFNPNAGSDQRVVNGGVPWPSPCPSHSSRPPSRYQSGPNSLPPRAATHTRPPSRPPSRPSRPPSHPSAHGSPAPVSTMPKRMSSEGPPRMSPKAQRHPRNHRVSAGRGSMSSGLEFVSHNPPSEAAAPPVARTSPAGGTWSSVVSGVPRLSPKTHRPRSPRQSSIGNSPSGPVLASPQAGIIPAEAVSMPVPAASPTPASPASNRALTPSIEAKDSRLQDQRQNSPAGSKENVKASETSPSFSKADNKGMSPVVSEHRKQIDDLKKFKNDFRLQPSSTSESMDQLLSKNREGEKSRDLIKDKTEASAKDSFIDSSSSSSNCTSGSSKTNSPSISPSMLSNAEHKRGPEVTSQGVQTSSPACKQEKDDREEKKDTTEQVRKSTLNPNAKEFNPRSFSQPKPSTTPTSPRPQAQPSPSMVGHQQPAPVYTQPVCFAPNMMYPVPVSPGVQPLYPIPMTPMPVNQAKTYRAGKVPNMPQQRQDQHHQSTMMHPASAAGPPIVATPPAYSTQYVAYSPQQFPNQPLVQHVPHYQSQHPHVYSPVIQGNARMMAPPAHAQPGLVSSSAAQFGAHEQTHAMYACPKLPYNKETSPSFYFAISTGSLAQQYAHPNAALHPHTPHPQPSATPTGQQQSQHGGSHPAPSPVQHHQHQAAQALHLASPQQQSAIYHAGLAPTPPSMTPASNTQSPQSSFPAAQQTVFTIHPSHVQPAYTTPPHMAHVPQAHVQSGMVPSHPTAHAPMMLMTTQPPGPKAALAQSALQPIPVSTTAHFPYMTHPSVQAHHQQQL.

Disordered stretches follow at residues 1–85 (MRSS…PGSR), 111–178 (ARAC…SPGA), and 197–224 (PVAS…GLPQ). The span at 29 to 38 (SLPRTARRGG) shows a compositional bias: basic residues. A compositionally biased stretch (pro residues) spans 48–65 (AGPPPRGPGAPPRGPRSP). The segment covering 128–144 (SSSARPAPGCPRPACEP) has biased composition (low complexity). Residues 205 to 214 (AGGGRPGLGR) show a composition bias toward gly residues. Phosphoserine is present on residues S218 and S219. One can recognise a Sm domain in the interval 237 to 314 (RMVHILTSVV…FVVVQFKDTD (78 aa)). Phosphoserine is present on residues S362 and S435. Composition is skewed to basic and acidic residues over residues 428–440 (ALEN…EEKY) and 447–461 (CSDR…RDNK). 2 disordered regions span residues 428 to 925 (ALEN…HQQP) and 1111 to 1191 (AALH…QSSF). S477 is modified (phosphoserine). Polar residues predominate over residues 498–510 (ASHTSDFNPNAGS). S523 carries the phosphoserine modification. The segment covering 526–552 (PSHSSRPPSRYQSGPNSLPPRAATHTR) has biased composition (low complexity). Residues 554–567 (PSRPPSRPSRPPSH) show a composition bias toward pro residues. Position 593 is a phosphoserine (S593). Over residues 596-606 (AQRHPRNHRVS) the composition is skewed to basic residues. Residue R609 is modified to Asymmetric dimethylarginine; alternate. Position 609 is an omega-N-methylarginine; alternate (R609). Phosphoserine occurs at positions 611 and 653. Residues 662–672 (PRQSSIGNSPS) show a composition bias toward polar residues. Residues 685–694 (PAEAVSMPVP) show a composition bias toward low complexity. S697 is modified (phosphoserine). A Phosphothreonine modification is found at T710. Over residues 737-746 (ASETSPSFSK) the composition is skewed to polar residues. Residues S741 and S753 each carry the phosphoserine modification. Residues 757–773 (SEHRKQIDDLKKFKNDF) are compositionally biased toward basic and acidic residues. Residues 776 to 789 (QPSSTSESMDQLLS) show a composition bias toward polar residues. The segment covering 790 to 813 (KNREGEKSRDLIKDKTEASAKDSF) has biased composition (basic and acidic residues). Residues 814-838 (IDSSSSSSNCTSGSSKTNSPSISPS) are compositionally biased toward low complexity. S827, S828, S832, S836, S838, S859, and S860 each carry phosphoserine. Polar residues predominate over residues 851 to 862 (VTSQGVQTSSPA). A Glycyl lysine isopeptide (Lys-Gly) (interchain with G-Cter in SUMO2) cross-link involves residue K864. A compositionally biased stretch (basic and acidic residues) spans 864 to 881 (KQEKDDREEKKDTTEQVR). Low complexity-rich tracts occupy residues 896-907 (SFSQPKPSTTPT) and 1128-1165 (GQQQ…QQSA).

The protein belongs to the ataxin-2 family. Interacts with RBFOX1. Monomer. Can also form homodimers. Interacts with polyribosomes. Interacts with EGFR. Interacts with SH3GL3. Interacts with SH3GL2, SH3KBP1 and CBL. Interacts with ATXN2L. In terms of tissue distribution, expressed in the heart, lung, liver, kidney, skeletal muscle, spleen and intestine. Predominant expression was seen in the brain where a high level expression was found in the pyramidal cortical neurons, large brain stem neurons and cerebellar Purkinje cells. All three isoforms were found in all the tissues except skeletal muscle where only isoform 1 was found.

It is found in the cytoplasm. Its function is as follows. Involved in EGFR trafficking, acting as negative regulator of endocytic EGFR internalization at the plasma membrane. This Mus musculus (Mouse) protein is Ataxin-2 (Atxn2).